Here is a 196-residue protein sequence, read N- to C-terminus: Guanylate kinase (196 aa).

Positions glycine 8–tyrosine 189 constitute a Guanylate kinase-like domain. Residue glycine 15–lysine 22 participates in ATP binding.

Belongs to the guanylate kinase family.

It is found in the cytoplasm. The catalysed reaction is GMP + ATP = GDP + ADP. Functionally, essential for recycling GMP and indirectly, cGMP. The protein is Guanylate kinase of Malacoplasma penetrans (strain HF-2) (Mycoplasma penetrans).